The primary structure comprises 601 residues: uncharacterized protein (601 aa).

Residues 127-364 (SSLFSSGSPP…PAFANDDTVH (238 aa)) form a disordered region. A compositionally biased stretch (polar residues) spans 128-137 (SLFSSGSPPD). Low complexity predominate over residues 141–154 (RNSTSNLSSVSTNS). 3 stretches are compositionally biased toward polar residues: residues 159 to 177 (TIGS…ASQR), 199 to 213 (ALSS…NVTP), and 232 to 250 (SATN…SPSQ). Ser-247 and Ser-281 each carry phosphoserine. Residues 265-281 (SLSSSPSSEDSDLSLSS) are compositionally biased toward low complexity. Composition is skewed to basic and acidic residues over residues 286–296 (DEKKQPSKSEK) and 313–325 (GSKE…KEKA). Ser-335 is subject to Phosphoserine. Residues 338-356 (DTSTEYDSNSLRRSRSNPA) are compositionally biased toward polar residues.

This is an uncharacterized protein from Schizosaccharomyces pombe (strain 972 / ATCC 24843) (Fission yeast).